Here is a 65-residue protein sequence, read N- to C-terminus: Keratin-associated protein 23-1 (65 aa).

In terms of assembly, interacts with hair keratins.

Its function is as follows. In the hair cortex, hair keratin intermediate filaments are embedded in an interfilamentous matrix, consisting of hair keratin-associated proteins (KRTAP), which are essential for the formation of a rigid and resistant hair shaft through their extensive disulfide bond cross-linking with abundant cysteine residues of hair keratins. The matrix proteins include the high-sulfur and high-glycine-tyrosine keratins. In Homo sapiens (Human), this protein is Keratin-associated protein 23-1 (KRTAP23-1).